The sequence spans 301 residues: Leucine-rich repeat-containing protein 30 (301 aa).

9 LRR repeats span residues 72–93 (EVQK…VGKL), 95–116 (RIVV…VSLL), 118–139 (CLKV…LSLC), 141–163 (KLEV…ADLS), 164–185 (RLRK…VFSL), 187–208 (ELIF…IQHL), 210–231 (SLQI…LCLV), 233–254 (SLEL…LHLL), and 265–287 (MDKG…VEGG).

The protein is Leucine-rich repeat-containing protein 30 (LRRC30) of Homo sapiens (Human).